A 211-amino-acid chain; its full sequence is Probable GTP-binding protein EngB (211 aa).

The region spanning 22–195 (PFPEVAFAGK…WQLIDSYVLP (174 aa)) is the EngB-type G domain. GTP is bound by residues 30 to 37 (GKSNVGKS), 57 to 61 (GKTQT), 75 to 78 (DLPG), 142 to 145 (TKLD), and 174 to 176 (FSS). Mg(2+) is bound by residues serine 37 and threonine 59.

It belongs to the TRAFAC class TrmE-Era-EngA-EngB-Septin-like GTPase superfamily. EngB GTPase family. Mg(2+) is required as a cofactor.

Necessary for normal cell division and for the maintenance of normal septation. In Lachnospira eligens (strain ATCC 27750 / DSM 3376 / VPI C15-48 / C15-B4) (Eubacterium eligens), this protein is Probable GTP-binding protein EngB.